We begin with the raw amino-acid sequence, 137 residues long: Large ribosomal subunit protein uL16 (137 aa).

This sequence belongs to the universal ribosomal protein uL16 family. Part of the 50S ribosomal subunit.

In terms of biological role, binds 23S rRNA and is also seen to make contacts with the A and possibly P site tRNAs. The polypeptide is Large ribosomal subunit protein uL16 (Thioalkalivibrio sulfidiphilus (strain HL-EbGR7)).